We begin with the raw amino-acid sequence, 31 residues long: Palustrin-2a (31 aa).

The cysteines at positions 23 and 29 are disulfide-linked.

In terms of tissue distribution, expressed by the skin glands.

Its subcellular location is the secreted. Antimicrobial activity against Gram-negative bacterium E.coli. This chain is Palustrin-2a, found in Lithobates palustris (Pickerel frog).